Here is a 1451-residue protein sequence, read N- to C-terminus: Glutamate receptor ionotropic, NMDA 2A (1451 aa).

Residues 1-20 (MGMFVLLLYTFLYAGDLGHG) form the signal peptide. The Extracellular segment spans residues 21 to 547 (AEKSFPVLNI…PSAFLEPFSA (527 aa)). An N-linked (GlcNAc...) asparagine glycan is attached at asparagine 67. Cysteine 79 and cysteine 312 are oxidised to a cystine. Residues histidine 120, aspartate 258, and aspartate 274 each contribute to the Zn(2+) site. 4 N-linked (GlcNAc...) asparagine glycosylation sites follow: asparagine 332, asparagine 372, asparagine 435, and asparagine 436. 2 disulfides stabilise this stretch: cysteine 421-cysteine 447 and cysteine 428-cysteine 448. 3 residues coordinate L-glutamate: serine 503, threonine 505, and arginine 510. Asparagine 533 carries N-linked (GlcNAc...) asparagine glycosylation. Residues 548–568 (SVWVMMFVMLLLVSAMAVFIF) traverse the membrane as a helical segment. At 569–592 (EYFSPVGYNRNLAQGKDPHGPSFT) the chain is on the cytoplasmic side. Residues 591–612 (FTIGKAVWLLWGLVFNNSVPVQ) are pore-forming. Residues 593 to 612 (IGKAVWLLWGLVFNNSVPVQ) constitute an intramembrane region (discontinuously helical). The Cytoplasmic segment spans residues 613 to 617 (NPKGT). Residues 618–637 (TSKIIVSIWAFFAVIFLASY) form a helical membrane-spanning segment. Over 638 to 808 (TANLAAFMIQ…VMSSQLDIDN (171 aa)) the chain is Extracellular. An N-linked (GlcNAc...) asparagine glycan is attached at asparagine 679. Serine 681, threonine 682, and aspartate 723 together coordinate L-glutamate. A disulfide bridge links cysteine 737 with cysteine 792. The helical transmembrane segment at 809-829 (MAGVFYMLAAAMALSLITFVW) threads the bilayer. Residues 830-1451 (EHLFYWKLRF…KKMPSLESDV (622 aa)) are Cytoplasmic-facing. The span at 1011–1022 (TLRQTQGSVNEN) shows a compositional bias: polar residues. Disordered regions lie at residues 1011 to 1080 (TLRQ…VSAK) and 1100 to 1165 (NRDK…GRLP). 3 stretches are compositionally biased toward basic and acidic residues: residues 1055–1073 (CHIDSENNNKHRKSKDNLK), 1100–1113 (NRDKVYTIDGDKEP), and 1138–1149 (YQDHNDNYRKTE).

It belongs to the glutamate-gated ion channel (TC 1.A.10.1) family. Heterotetramer. Forms heterotetrameric channels composed of two GluN1/zeta subunits (GRIN1), and two identical GluN2/epsilon subunits (GRIN2A, GRIN2B, GRIN2C or GRIN2D) or GluN3 subunits (GRIN3A or GRIN3B) (in vitro). In vivo, the subunit composition may depend on the expression levels of the different subunits.

The protein resides in the cell membrane. It is found in the postsynaptic cell membrane. It carries out the reaction Ca(2+)(in) = Ca(2+)(out). The enzyme catalyses Na(+)(in) = Na(+)(out). The catalysed reaction is K(+)(in) = K(+)(out). Its function is as follows. Component of N-methyl-D-aspartate (NMDA) receptors (NMDARs) that function as heterotetrameric, ligand-gated cation channels with high calcium permeability and voltage-dependent block by Mg(2+). MDARs participate in synaptic plasticity. Channel activation requires binding of the neurotransmitter L-glutamate to the GluN2 subunit, glycine binding to the GluN1 subunit, plus membrane depolarization to eliminate channel inhibition by Mg(2+). NMDARs mediate simultaneously the potasium efflux and the influx of calcium and sodium. Each GluN2 subunit confers differential attributes to channel properties, including activation, deactivation and desensitization kinetics, pH sensitivity, Ca2(+) permeability, and binding to allosteric modulators. Plays a role in dendritic branching in brain neurons and in synaptic plasticity. This chain is Glutamate receptor ionotropic, NMDA 2A, found in Xenopus laevis (African clawed frog).